Here is a 315-residue protein sequence, read N- to C-terminus: Carbamate kinase (315 aa).

The protein belongs to the carbamate kinase family. In terms of assembly, homodimer.

Its subcellular location is the cytoplasm. It carries out the reaction hydrogencarbonate + NH4(+) + ATP = carbamoyl phosphate + ADP + H2O + H(+). This is Carbamate kinase (cpkA) from Thermococcus kodakarensis (strain ATCC BAA-918 / JCM 12380 / KOD1) (Pyrococcus kodakaraensis (strain KOD1)).